Consider the following 428-residue polypeptide: Probable dual-specificity RNA methyltransferase RlmN 2 (428 aa).

The active-site Proton acceptor is the Glu-142. The Radical SAM core domain maps to 148-414; that stretch reads FAGRATACVS…STVRQRRGID (267 aa). The cysteines at positions 155 and 419 are disulfide-linked. Residues Cys-162, Cys-166, and Cys-169 each contribute to the [4Fe-4S] cluster site. Basic and acidic residues predominate over residues 207-228; the sequence is MRDPSPGREAGEKSRDEADRHR. Residues 207–232 are disordered; that stretch reads MRDPSPGREAGEKSRDEADRHRAPPT. S-adenosyl-L-methionine is bound by residues 244 to 245, Ser-276, 299 to 301, and Asn-375; these read GE and SLH. Cys-419 functions as the S-methylcysteine intermediate in the catalytic mechanism.

Belongs to the radical SAM superfamily. RlmN family. [4Fe-4S] cluster serves as cofactor.

It localises to the cytoplasm. The catalysed reaction is adenosine(2503) in 23S rRNA + 2 reduced [2Fe-2S]-[ferredoxin] + 2 S-adenosyl-L-methionine = 2-methyladenosine(2503) in 23S rRNA + 5'-deoxyadenosine + L-methionine + 2 oxidized [2Fe-2S]-[ferredoxin] + S-adenosyl-L-homocysteine. It catalyses the reaction adenosine(37) in tRNA + 2 reduced [2Fe-2S]-[ferredoxin] + 2 S-adenosyl-L-methionine = 2-methyladenosine(37) in tRNA + 5'-deoxyadenosine + L-methionine + 2 oxidized [2Fe-2S]-[ferredoxin] + S-adenosyl-L-homocysteine. Its function is as follows. Specifically methylates position 2 of adenine 2503 in 23S rRNA and position 2 of adenine 37 in tRNAs. This Opitutus terrae (strain DSM 11246 / JCM 15787 / PB90-1) protein is Probable dual-specificity RNA methyltransferase RlmN 2.